Reading from the N-terminus, the 154-residue chain is Probable chemoreceptor glutamine deamidase CheD (154 aa).

This sequence belongs to the CheD family.

It catalyses the reaction L-glutaminyl-[protein] + H2O = L-glutamyl-[protein] + NH4(+). Functionally, probably deamidates glutamine residues to glutamate on methyl-accepting chemotaxis receptors (MCPs), playing an important role in chemotaxis. In Methanococcus maripaludis (strain C5 / ATCC BAA-1333), this protein is Probable chemoreceptor glutamine deamidase CheD.